Consider the following 405-residue polypeptide: L-rhamnonate dehydratase (405 aa).

His-33 and Arg-59 together coordinate substrate. 3 residues coordinate Mg(2+): Asp-226, Glu-252, and Glu-280. His-329 acts as the Proton acceptor in catalysis. Glu-349 contributes to the substrate binding site.

The protein belongs to the mandelate racemase/muconate lactonizing enzyme family. RhamD subfamily. Homooctamer; tetramer of dimers. Requires Mg(2+) as cofactor.

The catalysed reaction is L-rhamnonate = 2-dehydro-3-deoxy-L-rhamnonate + H2O. Its function is as follows. Catalyzes the dehydration of L-rhamnonate to 2-keto-3-deoxy-L-rhamnonate (KDR). The chain is L-rhamnonate dehydratase from Shigella boydii serotype 4 (strain Sb227).